The primary structure comprises 80 residues: WAP four-disulfide core domain protein 15B (80 aa).

The N-terminal stretch at 1-20 is a signal peptide; sequence MKLLGLSLLAVTILLCCNMA. Residues 29 to 76 enclose the WAP domain; it reads VFSKPGYCPEYRVPCPFVLIPKCRRDKGCKDALKCCFFYCQMRCVDPW. 4 cysteine pairs are disulfide-bonded: Cys-36–Cys-64, Cys-43–Cys-68, Cys-51–Cys-63, and Cys-57–Cys-72.

As to expression, constitutively expressed in kidney and epididymis.

It is found in the secreted. Antibacterial protein which inhibits the growth of E.coli and S.aureus. The sequence is that of WAP four-disulfide core domain protein 15B (Wfdc15b) from Mus musculus (Mouse).